Here is a 616-residue protein sequence, read N- to C-terminus: Dihydroxy-acid dehydratase (616 aa).

Asp-81 provides a ligand contact to Mg(2+). Cys-122 provides a ligand contact to [2Fe-2S] cluster. Residues Asp-123 and Lys-124 each coordinate Mg(2+). At Lys-124 the chain carries N6-carboxylysine. Residue Cys-195 participates in [2Fe-2S] cluster binding. Glu-491 is a Mg(2+) binding site. The active-site Proton acceptor is the Ser-517.

The protein belongs to the IlvD/Edd family. In terms of assembly, homodimer. The cofactor is [2Fe-2S] cluster. Requires Mg(2+) as cofactor.

The catalysed reaction is (2R)-2,3-dihydroxy-3-methylbutanoate = 3-methyl-2-oxobutanoate + H2O. It carries out the reaction (2R,3R)-2,3-dihydroxy-3-methylpentanoate = (S)-3-methyl-2-oxopentanoate + H2O. Its pathway is amino-acid biosynthesis; L-isoleucine biosynthesis; L-isoleucine from 2-oxobutanoate: step 3/4. It functions in the pathway amino-acid biosynthesis; L-valine biosynthesis; L-valine from pyruvate: step 3/4. Its function is as follows. Functions in the biosynthesis of branched-chain amino acids. Catalyzes the dehydration of (2R,3R)-2,3-dihydroxy-3-methylpentanoate (2,3-dihydroxy-3-methylvalerate) into 2-oxo-3-methylpentanoate (2-oxo-3-methylvalerate) and of (2R)-2,3-dihydroxy-3-methylbutanoate (2,3-dihydroxyisovalerate) into 2-oxo-3-methylbutanoate (2-oxoisovalerate), the penultimate precursor to L-isoleucine and L-valine, respectively. The polypeptide is Dihydroxy-acid dehydratase (Salmonella typhi).